The sequence spans 417 residues: Putative UDP-arabinose 4-epimerase 2 (417 aa).

Over 1–31 (MLNLGRARTGRQNRSMSFEGLDFADPKKNNN) the chain is Cytoplasmic. The helical; Signal-anchor for type II membrane protein transmembrane segment at 32–54 (YMGKIVLVMTLTAMCILLLNQSP) threads the bilayer. Residues 55–417 (TFNTPSVFSR…YGSSSLVSAY (363 aa)) lie on the Lumenal side of the membrane. 71–102 (HVLVTGGAGYIGSHAALRLLKDSYRVTIVDNL) provides a ligand contact to NAD(+). Tyr-219 functions as the Proton acceptor in the catalytic mechanism.

It belongs to the NAD(P)-dependent epimerase/dehydratase family. The cofactor is NAD(+).

It localises to the golgi apparatus. The protein resides in the golgi stack membrane. The enzyme catalyses UDP-beta-L-arabinopyranose = UDP-alpha-D-xylose. It participates in nucleotide-sugar biosynthesis; UDP-L-arabinose biosynthesis; UDP-L-arabinose from UDP-alpha-D-xylose: step 1/1. It functions in the pathway cell wall biogenesis; cell wall polysaccharide biosynthesis. The polypeptide is Putative UDP-arabinose 4-epimerase 2 (Arabidopsis thaliana (Mouse-ear cress)).